The chain runs to 109 residues: uncharacterized protein (109 aa).

A disordered region spans residues Met1–Ile25. Residues Leu8–Gln22 show a composition bias toward low complexity. A helical membrane pass occupies residues Thr42–Leu62. The segment at Thr84 to Met109 is disordered. Over residues Pro91–Asn102 the composition is skewed to polar residues.

The protein resides in the host membrane. This is an uncharacterized protein from Bdellovibrio phage phiMH2K (Bacteriophage phiMH2K).